Here is a 624-residue protein sequence, read N- to C-terminus: Methyl-accepting chemotaxis protein McpG (624 aa).

A helical transmembrane segment spans residues 11–31; sequence ILLAASLIVILAFSLFTLYND. The Cache domain occupies 36–254; it reads NAIREDLENY…GLPSANWYIG (219 aa). A helical membrane pass occupies residues 272 to 292; that stretch reads SAVIATVVAVVIIIGLLGLLI. The HAMP domain occupies 293–347; the sequence is RVLMQPLHTMTRAMEDIAEGEGDLTKRLHIHSHDEFGVLGNAFNRFVERIHSSIR. The Methyl-accepting transducer domain occupies 352 to 588; that stretch reads ATEQVNEVAL…AINMDINEIN (237 aa).

The protein belongs to the methyl-accepting chemotaxis (MCP) protein family.

It is found in the cell membrane. Its function is as follows. Chemotactic-signal transducers respond to changes in the concentration of attractants and repellents in the environment, transduce a signal from the outside to the inside of the cell, and facilitate sensory adaptation through the variation of the level of methylation. McpG is a specific gamma-aminobutyric acid (GABA) chemoreceptor that recognizes GABA over a wide range of environmental conditions. Contributes to attraction to and colonization of plant roots. This is Methyl-accepting chemotaxis protein McpG from Pseudomonas putida (strain ATCC 47054 / DSM 6125 / CFBP 8728 / NCIMB 11950 / KT2440).